The sequence spans 1755 residues: Transposon Ty1-GR3 Gag-Pol polyprotein (1755 aa).

Composition is skewed to polar residues over residues 1 to 10 (MESQQLSNYP), 48 to 60 (TKAN…TPAS), and 127 to 152 (QSQF…GNTF). Disordered stretches follow at residues 1–93 (MESQ…MMTQ), 126–173 (PQSQ…RPPP), and 352–421 (GSRN…SKST). Low complexity predominate over residues 153-165 (TDSSSADSDMTST). The interval 299-401 (NNGIHINNKV…NSKSKTARAH (103 aa)) is RNA-binding. A compositionally biased stretch (low complexity) spans 402-418 (NVSTSNNSPSTDNDSIS). Position 416 is a phosphoserine (serine 416). The active-site For protease activity; shared with dimeric partner is the aspartate 461. The segment at 583–640 (NVHTSESTRKYPYPFIHRMLAHANAQTIRYSLKNNTITYFNESDVDWSSAIDYQCPDC) is integrase-type zinc finger-like. Positions 660–835 (NSYEPFQYLH…AGLDISTLLP (176 aa)) constitute an Integrase catalytic domain. Mg(2+) contacts are provided by aspartate 671 and aspartate 736. The interval 956 to 1172 (SKAVSPTDST…LGGIGDSNAY (217 aa)) is disordered. Low complexity predominate over residues 960–969 (SPTDSTPPST). 2 stretches are compositionally biased toward polar residues: residues 1005 to 1015 (STPQISNIEST) and 1031 to 1043 (MSQS…SYAS). A compositionally biased stretch (basic and acidic residues) spans 1044–1053 (KSKDFRHSDS). Polar residues-rich tracts occupy residues 1054 to 1082 (YSDN…QTSE) and 1095 to 1106 (SIDTSSSESNSL). Positions 1178 to 1212 (KKRSLEDNETEIKVSRDTWNTKNMRSLEPPRSKKR) match the Bipartite nuclear localization signal motif. Positions 1338–1476 (NNYYITQLDI…DILGLEIKYQ (139 aa)) constitute a Reverse transcriptase Ty1/copia-type domain. Mg(2+) contacts are provided by aspartate 1346, aspartate 1427, aspartate 1428, aspartate 1610, glutamate 1652, and aspartate 1685. One can recognise an RNase H Ty1/copia-type domain in the interval 1610–1752 (DASYGNQPYY…IKTFKLLTNK (143 aa)).

As to quaternary structure, the capsid protein forms a homotrimer, from which the VLPs are assembled. The protease is a homodimer, whose active site consists of two apposed aspartic acid residues. Initially, virus-like particles (VLPs) are composed of the structural unprocessed proteins Gag and Gag-Pol, and also contain the host initiator methionine tRNA (tRNA(i)-Met) which serves as a primer for minus-strand DNA synthesis, and a dimer of genomic Ty RNA. Processing of the polyproteins occurs within the particle and proceeds by an ordered pathway, called maturation. First, the protease (PR) is released by autocatalytic cleavage of the Gag-Pol polyprotein yielding capsid protein p45 and a Pol-p154 precursor protein. This cleavage is a prerequisite for subsequent processing of Pol-p154 at the remaining sites to release the mature structural and catalytic proteins. Maturation takes place prior to the RT reaction and is required to produce transposition-competent VLPs.

It is found in the cytoplasm. It localises to the nucleus. The enzyme catalyses DNA(n) + a 2'-deoxyribonucleoside 5'-triphosphate = DNA(n+1) + diphosphate. It catalyses the reaction Endonucleolytic cleavage to 5'-phosphomonoester.. Its function is as follows. Capsid protein (CA) is the structural component of the virus-like particle (VLP), forming the shell that encapsulates the retrotransposons dimeric RNA genome. The particles are assembled from trimer-clustered units and there are holes in the capsid shells that allow for the diffusion of macromolecules. CA also has nucleocapsid-like chaperone activity, promoting primer tRNA(i)-Met annealing to the multipartite primer-binding site (PBS), dimerization of Ty1 RNA and initiation of reverse transcription. Functionally, the aspartyl protease (PR) mediates the proteolytic cleavages of the Gag and Gag-Pol polyproteins after assembly of the VLP. Reverse transcriptase/ribonuclease H (RT) is a multifunctional enzyme that catalyzes the conversion of the retro-elements RNA genome into dsDNA within the VLP. The enzyme displays a DNA polymerase activity that can copy either DNA or RNA templates, and a ribonuclease H (RNase H) activity that cleaves the RNA strand of RNA-DNA heteroduplexes during plus-strand synthesis and hydrolyzes RNA primers. The conversion leads to a linear dsDNA copy of the retrotransposon that includes long terminal repeats (LTRs) at both ends. In terms of biological role, integrase (IN) targets the VLP to the nucleus, where a subparticle preintegration complex (PIC) containing at least integrase and the newly synthesized dsDNA copy of the retrotransposon must transit the nuclear membrane. Once in the nucleus, integrase performs the integration of the dsDNA into the host genome. This Saccharomyces cerevisiae (strain ATCC 204508 / S288c) (Baker's yeast) protein is Transposon Ty1-GR3 Gag-Pol polyprotein (TY1B-GR3).